A 930-amino-acid polypeptide reads, in one-letter code: Translation initiation factor IF-2 (930 aa).

Low complexity predominate over residues 50-67 (FKPAAAPKVEAKPAAPKV). 2 disordered regions span residues 50 to 195 (FKPA…PRID) and 260 to 346 (EVVP…HELP). 2 stretches are compositionally biased toward basic and acidic residues: residues 68–90 (SAEK…EAKP) and 110–125 (FKAE…AERR). Residues 129-141 (KGNNRDQQQNGNR) show a composition bias toward low complexity. Basic and acidic residues-rich tracts occupy residues 157 to 167 (RDNRRFNDQAK) and 262 to 295 (VPEK…DGPR). Residues 309-318 (NQKNSNWNNN) show a composition bias toward low complexity. The span at 337 to 346 (VTERKFHELP) shows a compositional bias: basic and acidic residues. The 168-residue stretch at 432–599 (ERPPVVTIMG…TVLLVAEIQE (168 aa)) folds into the tr-type G domain. The interval 441 to 448 (GHVDHGKT) is G1. 441–448 (GHVDHGKT) is a GTP binding site. The segment at 466–470 (GITQH) is G2. Residues 487 to 490 (DTPG) are G3. GTP-binding positions include 487 to 491 (DTPGH) and 541 to 544 (NKID). The tract at residues 541 to 544 (NKID) is G4. A G5 region spans residues 577 to 579 (SAK).

Belongs to the TRAFAC class translation factor GTPase superfamily. Classic translation factor GTPase family. IF-2 subfamily.

Its subcellular location is the cytoplasm. Its function is as follows. One of the essential components for the initiation of protein synthesis. Protects formylmethionyl-tRNA from spontaneous hydrolysis and promotes its binding to the 30S ribosomal subunits. Also involved in the hydrolysis of GTP during the formation of the 70S ribosomal complex. This chain is Translation initiation factor IF-2, found in Streptococcus pneumoniae (strain Hungary19A-6).